A 210-amino-acid chain; its full sequence is MKNVDDLIASAAELADRGLSKGEIADELNVSRETASWLVERSGAATEPEPRAEPEGPDDIHVDWNAIGSGGKRLTYVGRALADLLMETNGEADVTVGIEKAGVPLATSVSRELETTLGAYSPAKHQWDEGDLEDLGGGFSRNFSPVEGRDCFIVDDTVTSGTTLRETIDAIRSEGGEPLACVVIVDKQGVEEIDGVPVHSLINVVRVGEQ.

Residues Val39 to Ile60 form a disordered region. A compositionally biased stretch (basic and acidic residues) spans Pro48 to Ile60.

It belongs to the purine/pyrimidine phosphoribosyltransferase family. GfcR subfamily.

With respect to regulation, interaction with effectors modulates GfcR activity. 2-keto-3-deoxy-6-phosphogluconate (KDPG), fructose-1,6-bisphosphate (FBP), 2-keto-3-deoxy-6-phosphogalactonate (KDPGal) and glycerol-3-phosphate (G3P), which are intermediates of sugar and glycerol degradation pathways, can act as inducer molecules. Its function is as follows. DNA-binding transcriptional regulator that functions as a regulator of central sugar catabolic pathways. Is both a local regulator of specific steps in the pathways for D-glucose and D-fructose degradation and a global regulator of hexose catabolism. In the presence of D-glucose, activates expression of the gene encoding the gluconate dehydratase (gad), which is involved in D-glucose catabolism via the semiphosphorylative Entner-Doudoroff (spED) pathway. In the presence of D-fructose, activates expression of the genes encoding the PTS system EIIC component (ptfC) and the fructose-1,6-bisphosphate aldolase (fba), which are involved in D-fructose uptake and degradation via the modified Embden-Meyerhof pathway. In addition, in the presence of D-glucose, D-fructose, D-galactose or glycerol, it activates expression of the genes encoding glyceraldehyde-3-phosphate dehydrogenase (gap) and pyruvate kinase (pykA), enzymes common to all four degradation pathways. Acts by binding directly to the promoter region of the regulated genes. The sequence is that of Transcriptional regulator GfcR from Haloferax volcanii (strain ATCC 29605 / DSM 3757 / JCM 8879 / NBRC 14742 / NCIMB 2012 / VKM B-1768 / DS2) (Halobacterium volcanii).